The chain runs to 232 residues: Orotidine 5'-phosphate decarboxylase (232 aa).

Substrate-binding positions include Asp-13, Lys-35, 62 to 71 (DLKFHDIPNT), Thr-121, Arg-182, Gln-191, Gly-211, and Arg-212. Catalysis depends on Lys-64, which acts as the Proton donor.

This sequence belongs to the OMP decarboxylase family. Type 1 subfamily. In terms of assembly, homodimer.

It carries out the reaction orotidine 5'-phosphate + H(+) = UMP + CO2. The protein operates within pyrimidine metabolism; UMP biosynthesis via de novo pathway; UMP from orotate: step 2/2. Functionally, catalyzes the decarboxylation of orotidine 5'-monophosphate (OMP) to uridine 5'-monophosphate (UMP). This Teredinibacter turnerae (strain ATCC 39867 / T7901) protein is Orotidine 5'-phosphate decarboxylase.